A 463-amino-acid chain; its full sequence is Asparagine--tRNA ligase (463 aa).

The protein belongs to the class-II aminoacyl-tRNA synthetase family. As to quaternary structure, homodimer.

It localises to the cytoplasm. The enzyme catalyses tRNA(Asn) + L-asparagine + ATP = L-asparaginyl-tRNA(Asn) + AMP + diphosphate + H(+). The sequence is that of Asparagine--tRNA ligase from Alkaliphilus oremlandii (strain OhILAs) (Clostridium oremlandii (strain OhILAs)).